The primary structure comprises 671 residues: UBA domain-containing protein RUP1 (671 aa).

Residues 1–41 (MMDNQAVKSLLEMGIPHEVAVDALQRTGGNLEAAVNFIFSN) enclose the UBA domain. At serine 56 the chain carries Phosphoserine. The segment at 68–87 (GTKPCDVPNNGDQDIDMPDV) is disordered. Residues 432–501 (SKRKQARTRS…LNSARAAKME (70 aa)) adopt a coiled-coil conformation. A disordered region spans residues 643-671 (DGMGDPEQATNNINNGNDNDNDDDIDSDN). The segment covering 661-671 (NDNDDDIDSDN) has biased composition (acidic residues).

In terms of assembly, forms a ternary complex with RSP5 and UBP2.

Its subcellular location is the cytoplasm. It is found in the nucleus. Modulates the activity of the RSP5 HECT ubiquitin-protein ligase through its mediation of the interaction between RSP5 and the deubiquitinase UBP2. Involved in regulation of cell wall homeostasis. This is UBA domain-containing protein RUP1 (RUP1) from Saccharomyces cerevisiae (strain ATCC 204508 / S288c) (Baker's yeast).